A 1122-amino-acid polypeptide reads, in one-letter code: TSET complex member tstF (1122 aa).

The span at 88–126 (SSSASGINGTNNNNSGSNSSNNNNNNNGSLSNSPNNNNN) shows a compositional bias: low complexity. Disordered regions lie at residues 88–131 (SSSA…AFIG) and 178–215 (QTLHNRSPNNTIKLSPNSSNNDSLNNNNNNINNNSTNS). Residues 178–190 (QTLHNRSPNNTIK) are compositionally biased toward polar residues. Over residues 191-215 (LSPNSSNNDSLNNNNNNINNNSTNS) the composition is skewed to low complexity. 3 WD repeats span residues 298-337 (FENKSPNSVEFFSNSPFVAFGGPDSMIRLWNTEKWEIEKQ), 342-381 (PKGTIVKLKAIEIEGEFLVSGGTDGFVCVWNVKTGSLATQ), and 383-422 (SKVHEIVDLSYDYVTGQVMALTQDRHIMIYDLNTLKEVSK). A disordered region spans residues 731–775 (NGSVGGSSSNNSANSNNSNNNNNNNNNNSNNSNNNNNSSQPILEP).

Component of the TSET complex, a heterohexamer composed of tstA, tstB, tstC, tstD, tstE and tstF, which may act in plasma membrane turnover. tstA, tstB, tstC and tstD are likely to be the core complex members with tstE and tstF acting as associated scaffold proteins.

This Dictyostelium discoideum (Social amoeba) protein is TSET complex member tstF.